Consider the following 589-residue polypeptide: Aspartate--tRNA(Asp/Asn) ligase (589 aa).

E172 contributes to the L-aspartate binding site. The segment at 196–199 (QLFK) is aspartate. Residue R218 coordinates L-aspartate. ATP contacts are provided by residues 218–220 (RDE) and Q227. H449 contributes to the L-aspartate binding site. E483 lines the ATP pocket. R490 provides a ligand contact to L-aspartate. Residue 535 to 538 (GVDR) participates in ATP binding.

It belongs to the class-II aminoacyl-tRNA synthetase family. Type 1 subfamily. As to quaternary structure, homodimer.

The protein localises to the cytoplasm. The enzyme catalyses tRNA(Asx) + L-aspartate + ATP = L-aspartyl-tRNA(Asx) + AMP + diphosphate. Functionally, aspartyl-tRNA synthetase with relaxed tRNA specificity since it is able to aspartylate not only its cognate tRNA(Asp) but also tRNA(Asn). Reaction proceeds in two steps: L-aspartate is first activated by ATP to form Asp-AMP and then transferred to the acceptor end of tRNA(Asp/Asn). In Francisella philomiragia subsp. philomiragia (strain ATCC 25017 / CCUG 19701 / FSC 153 / O#319-036), this protein is Aspartate--tRNA(Asp/Asn) ligase.